Consider the following 434-residue polypeptide: Prenyltransferase fogH (434 aa).

Residue Glu86 coordinates L-tryptophan. 5 residues coordinate substrate: Arg101, Arg248, Lys250, Tyr252, and Tyr346.

It belongs to the tryptophan dimethylallyltransferase family.

It functions in the pathway secondary metabolite biosynthesis. Its function is as follows. Prenyltransferase; part of the gene cluster that mediates the biosynthesis of flavoglaucin and congeners (including aspergin, dihydroauroglaucin and auroglaucin), prenylated salicylaldehyde derivatives carrying a saturated or an unsaturated C-7 side chain. The PKS fogA releases the carboxylic acid (8E,10E,12E)-3,5,7-trihydroxytetradeca-8,10,12-trienoic acid as its product, as well as derivatives with one and two double bonds. FogA is indeed able to reduce the initial triketide, thus being at least partially responsible for the differently saturated heptyl side chains of flavoglaucin congeners. The oxidoreductases fogB, fogC and fogD modify the nascent polyketide in fogA-bound form and, together, fogA, fogB, fogC and fogD are necessary for the formation of the aromatic core and the cyclized PKS products are released as salicyl alcohols. In particular, fogB is responsible for oxidation of a hydroxyl group or reduction of remaining double bond(s) at the C-7 residue whereas fogD is probably involved in the reductive release of the modified PKS products. The cytochrome P450 monooxygenase fogE is then responsible for the hydroxylation at C-3 of the benzene ring. The fogE products are substrates of the prenyltransferase fogH and the prenylated benzyl alcohols are subsequently oxidized by the fogF to produce the final aryl aldehydes flavoglaucin and congeners. The short-chain dehydrogenase fogG does not seem to be involved in the biosynthesis of the prenylated salicylaldehyde derivatives. In Aspergillus ruber (strain CBS 135680), this protein is Prenyltransferase fogH.